The chain runs to 491 residues: Lysosomal Pro-X carboxypeptidase (491 aa).

A signal peptide spans 1 to 17 (MGCRALLLLSFLLLGAA). Positions 18-43 (TTIPPRLKTLGSPHLSASPTPDPAVA) are excised as a propeptide. N-linked (GlcNAc...) asparagine glycosylation occurs at N99. The Charge relay system role is filled by S177. Residues 192–332 (HIVVGALAAS…QNIFQALSVY (141 aa)) are SKS domain. Intrachain disulfides connect C213–C370, C231–C308, C262–C341, and C362–C392. 3 N-linked (GlcNAc...) asparagine glycosylation sites follow: N315, N334, and N343. A glycan (N-linked (GlcNAc...) asparagine) is linked at N413. Active-site charge relay system residues include D428 and H453.

It belongs to the peptidase S28 family. As to quaternary structure, homodimer.

The protein resides in the lysosome. The enzyme catalyses Cleavage of a -Pro-|-Xaa bond to release a C-terminal amino acid.. Cleaves C-terminal amino acids linked to proline in peptides such as angiotensin II, III and des-Arg9-bradykinin. This cleavage occurs at acidic pH, but enzymatic activity is retained with some substrates at neutral pH. In Mus musculus (Mouse), this protein is Lysosomal Pro-X carboxypeptidase (Prcp).